Reading from the N-terminus, the 329-residue chain is Helicase VP6-A (329 aa).

Disordered regions lie at residues 28-130 (NLVD…TNGG) and 189-232 (DLRR…SEEP). Basic and acidic residues-rich tracts occupy residues 36-58 (EGGK…KDGE), 65-83 (GQKE…DRRI), and 96-109 (SGER…RGDG). ATP is bound at residue Lys-110. Residues 110–129 (KVGGGGGDADAGVGATGTNG) are compositionally biased toward gly residues. 2 stretches are compositionally biased toward basic and acidic residues: residues 189 to 207 (DLRR…ERGG) and 215 to 232 (HGDA…SEEP).

The protein belongs to the reoviruses VP6 family. As to quaternary structure, homohexamer.

Its subcellular location is the virion. The catalysed reaction is ATP + H2O = ADP + phosphate + H(+). Its function is as follows. ATP dependent RNA helicase essential for RNA packaging and viral transcription. Possesses ss- and dsRNA-binding capacity. This is Helicase VP6-A (Segment-9) from Bluetongue virus 10 (isolate USA) (BTV 10).